Consider the following 69-residue polypeptide: Putative membrane protein insertion efficiency factor (69 aa).

Belongs to the UPF0161 family.

It localises to the cell inner membrane. Could be involved in insertion of integral membrane proteins into the membrane. The polypeptide is Putative membrane protein insertion efficiency factor (Geobacter metallireducens (strain ATCC 53774 / DSM 7210 / GS-15)).